We begin with the raw amino-acid sequence, 333 residues long: Glycerol-3-phosphate dehydrogenase [NAD(P)+] (333 aa).

NADPH contacts are provided by Trp16, Arg36, and Lys109. Sn-glycerol 3-phosphate-binding residues include Lys109, Gly137, and Ser139. Residue Ala141 participates in NADPH binding. 5 residues coordinate sn-glycerol 3-phosphate: Lys192, Asp245, Ser255, Arg256, and Asn257. Lys192 acts as the Proton acceptor in catalysis. Residue Arg256 coordinates NADPH. Residues Val280 and Glu282 each contribute to the NADPH site.

It belongs to the NAD-dependent glycerol-3-phosphate dehydrogenase family.

Its subcellular location is the cytoplasm. It catalyses the reaction sn-glycerol 3-phosphate + NAD(+) = dihydroxyacetone phosphate + NADH + H(+). It carries out the reaction sn-glycerol 3-phosphate + NADP(+) = dihydroxyacetone phosphate + NADPH + H(+). Its pathway is membrane lipid metabolism; glycerophospholipid metabolism. In terms of biological role, catalyzes the reduction of the glycolytic intermediate dihydroxyacetone phosphate (DHAP) to sn-glycerol 3-phosphate (G3P), the key precursor for phospholipid synthesis. The chain is Glycerol-3-phosphate dehydrogenase [NAD(P)+] from Parvibaculum lavamentivorans (strain DS-1 / DSM 13023 / NCIMB 13966).